The sequence spans 921 residues: Collagen alpha-1(IX) chain (921 aa).

A signal peptide spans 1–23; sequence MKTCWKIPVFFFVCSFLEPWASA. Residues 24-268 are nonhelical region (NC4); that stretch reads AVKRRPRFPV…ITPSQTTDER (245 aa). Disulfide bonds link Cys-44-Cys-242 and Cys-198-Cys-252. A Laminin G-like domain is found at 50-244; sequence GQDDLPGFDL…LQWMLIHCDP (195 aa). N-linked (GlcNAc...) asparagine glycosylation occurs at Asn-171. Positions 213, 215, and 253 each coordinate Zn(2+). 2 disordered regions span residues 254–759 and 783–905; these read ELPA…APTD and RPDS…EPAS. 8 Collagen-like domains span residues 269–324, 325–356, 358–403, 416–472, 473–516, 587–643, 655–712, and 713–755; these read GPPG…TPGA, DGLT…GFPG, GIPG…GTIG, PPGR…GLRG, ITGI…AGPK, EKGS…GKLG, GPPG…GEPG, and LRGP…PPGR. The segment at 269–405 is triple-helical region (COL3); that stretch reads GPPGEQGPPG…PGPRGTIGFH (137 aa). Composition is skewed to pro residues over residues 273 to 285 and 298 to 307; these read EQGP…PPGV and KGPPGPPGPA. Over residues 368-383 the composition is skewed to low complexity; the sequence is TAGLPGELGRVGPVGD. Pro residues predominate over residues 387–398; that stretch reads RGPPGPPGPPGP. The interval 406 to 417 is nonhelical region (NC3); that stretch reads DGDPLCPNACPP. The interval 418–756 is triple-helical region (COL2); sequence GRSGYPGLPG…PGVQGPPGRA (339 aa). Over residues 479 to 489 the composition is skewed to basic and acidic residues; it reads DKGEKGARGLD. 2 stretches are compositionally biased toward low complexity: residues 602-621 and 630-650; these read NSGK…RGPQ and LGPV…SPGL. The tract at residues 757–786 is nonhelical region (NC2); the sequence is PTDQHIKQVCMRVIQEHFAEMAASLKRPDS. The triple-helical region (COL1) stretch occupies residues 787–901; it reads GATGLPGRPG…PGPPGLPGFC (115 aa). 2 Collagen-like domains span residues 790 to 847 and 848 to 899; these read GLPG…GPPG and RGPN…GLPG. Over residues 794–804 the composition is skewed to pro residues; that stretch reads RPGPPGPPGPP. Over residues 833–845 the composition is skewed to basic and acidic residues; the sequence is PKGDLGEKGERGP. Residues 888–897 show a composition bias toward pro residues; that stretch reads VPGPPGPPGL. A nonhelical region (NC1) region spans residues 902 to 921; it reads EPASCTMQAGQRAFNKGPDP.

This sequence belongs to the fibril-associated collagens with interrupted helices (FACIT) family. In terms of assembly, heterotrimer of an alpha 1(IX), an alpha 2(IX) and an alpha 3(IX) chain. Post-translationally, covalently linked to the telopeptides of type II collagen by lysine-derived cross-links. Prolines at the third position of the tripeptide repeating unit (G-X-Y) are hydroxylated in some or all of the chains.

Its subcellular location is the secreted. The protein localises to the extracellular space. It localises to the extracellular matrix. Functionally, structural component of hyaline cartilage and vitreous of the eye. This Homo sapiens (Human) protein is Collagen alpha-1(IX) chain (COL9A1).